Here is a 271-residue protein sequence, read N- to C-terminus: Putative protein FAM220BP (271 aa).

In Homo sapiens (Human), this protein is Putative protein FAM220BP (FAM220BP).